The following is a 187-amino-acid chain: UPF0301 protein ETA_28320 (187 aa).

Belongs to the UPF0301 (AlgH) family.

The polypeptide is UPF0301 protein ETA_28320 (Erwinia tasmaniensis (strain DSM 17950 / CFBP 7177 / CIP 109463 / NCPPB 4357 / Et1/99)).